A 481-amino-acid polypeptide reads, in one-letter code: Glutamyl-tRNA(Gln) amidotransferase subunit A (481 aa).

Active-site charge relay system residues include lysine 76 and serine 151. Serine 175 functions as the Acyl-ester intermediate in the catalytic mechanism.

It belongs to the amidase family. GatA subfamily. As to quaternary structure, heterotrimer of A, B and C subunits.

It catalyses the reaction L-glutamyl-tRNA(Gln) + L-glutamine + ATP + H2O = L-glutaminyl-tRNA(Gln) + L-glutamate + ADP + phosphate + H(+). Functionally, allows the formation of correctly charged Gln-tRNA(Gln) through the transamidation of misacylated Glu-tRNA(Gln) in organisms which lack glutaminyl-tRNA synthetase. The reaction takes place in the presence of glutamine and ATP through an activated gamma-phospho-Glu-tRNA(Gln). The chain is Glutamyl-tRNA(Gln) amidotransferase subunit A from Neisseria meningitidis serogroup B (strain ATCC BAA-335 / MC58).